A 420-amino-acid polypeptide reads, in one-letter code: DNA replication and repair protein RecF (420 aa).

30–37 contacts ATP; sequence GRNGQGKT. A disordered region spans residues 175 to 214; that stretch reads RKGGFARKGGFAPLGPPEGRPEGPPEGRTGGSATSGPPSR.

It belongs to the RecF family.

Its subcellular location is the cytoplasm. The RecF protein is involved in DNA metabolism; it is required for DNA replication and normal SOS inducibility. RecF binds preferentially to single-stranded, linear DNA. It also seems to bind ATP. This chain is DNA replication and repair protein RecF, found in Nocardioides sp. (strain ATCC BAA-499 / JS614).